The chain runs to 131 residues: Small ribosomal subunit protein uS8 (131 aa).

It belongs to the universal ribosomal protein uS8 family. In terms of assembly, part of the 30S ribosomal subunit. Contacts proteins S5 and S12.

Its function is as follows. One of the primary rRNA binding proteins, it binds directly to 16S rRNA central domain where it helps coordinate assembly of the platform of the 30S subunit. This is Small ribosomal subunit protein uS8 from Azobacteroides pseudotrichonymphae genomovar. CFP2.